Here is a 382-residue protein sequence, read N- to C-terminus: Succinyl-diaminopimelate desuccinylase (382 aa).

Zn(2+) is bound at residue H71. D73 is a catalytic residue. A Zn(2+)-binding site is contributed by D105. E139 acts as the Proton acceptor in catalysis. Positions 140, 168, and 354 each coordinate Zn(2+).

This sequence belongs to the peptidase M20A family. DapE subfamily. In terms of assembly, homodimer. The cofactor is Zn(2+). It depends on Co(2+) as a cofactor.

The catalysed reaction is N-succinyl-(2S,6S)-2,6-diaminopimelate + H2O = (2S,6S)-2,6-diaminopimelate + succinate. Its pathway is amino-acid biosynthesis; L-lysine biosynthesis via DAP pathway; LL-2,6-diaminopimelate from (S)-tetrahydrodipicolinate (succinylase route): step 3/3. Its function is as follows. Catalyzes the hydrolysis of N-succinyl-L,L-diaminopimelic acid (SDAP), forming succinate and LL-2,6-diaminopimelate (DAP), an intermediate involved in the bacterial biosynthesis of lysine and meso-diaminopimelic acid, an essential component of bacterial cell walls. This chain is Succinyl-diaminopimelate desuccinylase, found in Stutzerimonas stutzeri (strain A1501) (Pseudomonas stutzeri).